A 153-amino-acid chain; its full sequence is 3-hydroxyacyl-[acyl-carrier-protein] dehydratase FabZ (153 aa).

His54 is a catalytic residue.

Belongs to the thioester dehydratase family. FabZ subfamily.

The protein resides in the cytoplasm. The catalysed reaction is a (3R)-hydroxyacyl-[ACP] = a (2E)-enoyl-[ACP] + H2O. Its function is as follows. Involved in unsaturated fatty acids biosynthesis. Catalyzes the dehydration of short chain beta-hydroxyacyl-ACPs and long chain saturated and unsaturated beta-hydroxyacyl-ACPs. This is 3-hydroxyacyl-[acyl-carrier-protein] dehydratase FabZ from Shewanella sediminis (strain HAW-EB3).